The chain runs to 410 residues: Lissencephaly-1 homolog (410 aa).

Residues 7 to 39 (QRDELNRAIADYLRSNGYEEAYSVFKKEAELDV) form the LisH domain. Positions 56-82 (TSVIRLQKKVMELESKLNEAKEEFTSG) form a coiled coil. WD repeat units follow at residues 106-147 (GHRS…RTLK), 148-187 (GHTDSVQDISFDHTGKLLASCSADMTIKLWDFQGFECIRT), 190-229 (GHDHNVSSVAIMPNGDHIVSASRDKTIKMWEVQTGYCVKT), 232-271 (GHREWVRMVRPNQDGTLIASCSNDQTVRVWVVATKECKAE), 274-333 (EHEH…CLMT), 336-377 (GHDN…KTLN), and 378-410 (AHEHFVTSLDFHKTAPYVVTGSVDQTVKVWECR).

Belongs to the WD repeat LIS1/nudF family. As to quaternary structure, can self-associate. Component of the cytosolic PAF-AH (I) heterotetrameric enzyme, which is composed of PAFAH1B1 (beta), PAFAH1B2 (alpha2) and PAFAH1B3 (alpha1) subunits. The catalytic activity of the enzyme resides in the alpha1 (PAFAH1B3) and alpha2 (PAFAH1B2) subunits, whereas the beta subunit (PAFAH1B1) has regulatory activity. Trimer formation is not essential for the catalytic activity. Interacts with dynein, dynactin, NDE1 and NDEL1.

The protein resides in the cytoplasm. It localises to the cytoskeleton. Its subcellular location is the microtubule organizing center. The protein localises to the centrosome. Its function is as follows. Regulatory subunit (beta subunit) of the cytosolic type I platelet-activating factor (PAF) acetylhydrolase (PAF-AH (I)), an enzyme that catalyzes the hydrolyze of the acetyl group at the sn-2 position of PAF and its analogs and participates in PAF inactivation. Regulates the PAF-AH (I) activity in a catalytic dimer composition-dependent manner. Positively regulates the activity of the minus-end directed microtubule motor protein dynein. May enhance dynein-mediated microtubule sliding by targeting dynein to the microtubule plus end. Required for several dynein- and microtubule-dependent processes such as the maintenance of Golgi integrity, the peripheral transport of microtubule fragments and the coupling of the nucleus and centrosome. May be required for proliferation of neuronal precursors and neuronal migration. The sequence is that of Lissencephaly-1 homolog from Gallus gallus (Chicken).